Consider the following 292-residue polypeptide: 3-methyl-2-oxobutanoate hydroxymethyltransferase 2 (292 aa).

Aspartate 52 and aspartate 91 together coordinate Mg(2+). Residues 52-53, aspartate 91, and lysine 120 each bind 3-methyl-2-oxobutanoate; that span reads DS. Glutamate 122 serves as a coordination point for Mg(2+). The active-site Proton acceptor is glutamate 189.

It belongs to the PanB family. Homodecamer; pentamer of dimers. The cofactor is Mg(2+).

It is found in the cytoplasm. The catalysed reaction is 3-methyl-2-oxobutanoate + (6R)-5,10-methylene-5,6,7,8-tetrahydrofolate + H2O = 2-dehydropantoate + (6S)-5,6,7,8-tetrahydrofolate. Its pathway is cofactor biosynthesis; (R)-pantothenate biosynthesis; (R)-pantoate from 3-methyl-2-oxobutanoate: step 1/2. Functionally, catalyzes the reversible reaction in which hydroxymethyl group from 5,10-methylenetetrahydrofolate is transferred onto alpha-ketoisovalerate to form ketopantoate. The chain is 3-methyl-2-oxobutanoate hydroxymethyltransferase 2 from Bradyrhizobium diazoefficiens (strain JCM 10833 / BCRC 13528 / IAM 13628 / NBRC 14792 / USDA 110).